The chain runs to 150 residues: Arginine repressor (150 aa).

The protein belongs to the ArgR family.

The protein localises to the cytoplasm. Its pathway is amino-acid biosynthesis; L-arginine biosynthesis [regulation]. In terms of biological role, regulates arginine biosynthesis genes. The chain is Arginine repressor from Clostridium botulinum (strain 657 / Type Ba4).